Reading from the N-terminus, the 284-residue chain is Asialoglycoprotein receptor 1 (284 aa).

The Cytoplasmic segment spans residues 1–39 (MTKDYQDFQHLDNENDHHQLQRGPPPAPRLLQRLCSGFR). The Endocytosis signal signature appears at 5-8 (YQDF). The S-palmitoyl cysteine moiety is linked to residue cysteine 35. A helical; Signal-anchor for type II membrane protein membrane pass occupies residues 40 to 60 (LFLLSLGLSILLLVVVCVITS). Residues 58 to 122 (ITSQNSQLRE…EDLREDHSRL (65 aa)) adopt a coiled-coil conformation. Topologically, residues 61–284 (QNSQLREDLR…VCETELGKAN (224 aa)) are extracellular. N-linked (GlcNAc...) asparagine glycosylation is found at asparagine 75, asparagine 78, and asparagine 146. Intrachain disulfides connect cysteine 153-cysteine 164, cysteine 181-cysteine 276, and cysteine 254-cysteine 268. Residues 160-277 (YEGSCYWFSS…CRRPYRWVCE (118 aa)) form the C-type lectin domain. Positions 190, 196, 215, 239, 241, 242, 252, 253, 264, 265, and 277 each coordinate Ca(2+).

Interacts with LASS2. Post-translationally, phosphorylated on a cytoplasmic Ser residue. In terms of tissue distribution, expressed exclusively in hepatic parenchymal cells.

The protein resides in the membrane. Functionally, mediates the endocytosis of plasma glycoproteins to which the terminal sialic acid residue on their complex carbohydrate moieties has been removed. The receptor recognizes terminal galactose and N-acetylgalactosamine units. After ligand binding to the receptor, the resulting complex is internalized and transported to a sorting organelle, where receptor and ligand are disassociated. The receptor then returns to the cell membrane surface. The protein is Asialoglycoprotein receptor 1 (Asgr1) of Rattus norvegicus (Rat).